A 92-amino-acid polypeptide reads, in one-letter code: Small ribosomal subunit protein bS20 (92 aa).

The interval 1–23 (MANSPSAKKRAKQAEKRRSHNAS) is disordered. A compositionally biased stretch (basic residues) spans 7–20 (AKKRAKQAEKRRSH).

Belongs to the bacterial ribosomal protein bS20 family.

Its function is as follows. Binds directly to 16S ribosomal RNA. The chain is Small ribosomal subunit protein bS20 from Pseudomonas fluorescens (strain ATCC BAA-477 / NRRL B-23932 / Pf-5).